Consider the following 352-residue polypeptide: Aliphatic aldoxime dehydratase (352 aa).

Ser219 provides a ligand contact to an aliphatic aldoxime. Residue His299 participates in heme b binding. His320 is an an aliphatic aldoxime binding site. His320 is an active-site residue.

It belongs to the heme-containing dehydratase family. In terms of assembly, homodimer. It depends on heme b as a cofactor. Ca(2+) serves as cofactor.

It catalyses the reaction an aliphatic aldoxime = a nitrile + H2O. With respect to regulation, active when the heme iron is in the ferrous state. Is very sensitive to AgNO(3), is also inhibited by hydroxylamine and phenylhydrazine, and hardly inhibited by thiol reagents. Not sensitive to chelating agents and serine-modifying reagents. Catalyzes the dehydration of aldoximes to their corresponding nitrile. Aliphatic aldoximes are more effective substrates than aromatic aldoximes. Shows high activity with butyraldoxime and acetaldoxime, but only weak activity with the aromatic aldoxime pyridine-2-aldoxime. Cannot use benzaldoxime, isonitrosoacetophenone and pyridine-4-aldoxime. Is involved in the metabolism of aldoxime in vivo. In Pseudomonas chlororaphis (Pseudomonas aureofaciens), this protein is Aliphatic aldoxime dehydratase.